Consider the following 375-residue polypeptide: Lipid-A-disaccharide synthase (375 aa).

This sequence belongs to the LpxB family.

The enzyme catalyses a lipid X + a UDP-2-N,3-O-bis[(3R)-3-hydroxyacyl]-alpha-D-glucosamine = a lipid A disaccharide + UDP + H(+). The protein operates within bacterial outer membrane biogenesis; LPS lipid A biosynthesis. In terms of biological role, condensation of UDP-2,3-diacylglucosamine and 2,3-diacylglucosamine-1-phosphate to form lipid A disaccharide, a precursor of lipid A, a phosphorylated glycolipid that anchors the lipopolysaccharide to the outer membrane of the cell. This Pseudomonas putida (strain W619) protein is Lipid-A-disaccharide synthase.